The primary structure comprises 314 residues: Dioxygenase easH (314 aa).

Fe cation-binding residues include His141, Asp143, and His217.

The protein belongs to the PhyH family. Homodimer. Fe cation is required as a cofactor.

It participates in alkaloid biosynthesis; ergot alkaloid biosynthesis. Its function is as follows. Dioxygenase; part of the gene cluster that mediates the biosynthesis of fungal ergot alkaloid. DmaW catalyzes the first step of ergot alkaloid biosynthesis by condensing dimethylallyl diphosphate (DMAP) and tryptophan to form 4-dimethylallyl-L-tryptophan. The second step is catalyzed by the methyltransferase easF that methylates 4-dimethylallyl-L-tryptophan in the presence of S-adenosyl-L-methionine, resulting in the formation of 4-dimethylallyl-L-abrine. The catalase easC and the FAD-dependent oxidoreductase easE then transform 4-dimethylallyl-L-abrine to chanoclavine-I which is further oxidized by easD in the presence of NAD(+), resulting in the formation of chanoclavine-I aldehyde. Agroclavine dehydrogenase easG then mediates the conversion of chanoclavine-I aldehyde to agroclavine via a non-enzymatic adduct reaction: the substrate is an iminium intermediate that is formed spontaneously from chanoclavine-I aldehyde in the presence of glutathione. The presence of easA is not required to complete this reaction. Further conversion of agroclavine to paspalic acid is a two-step process involving oxidation of agroclavine to elymoclavine and of elymoclavine to paspalic acid, the second step being performed by the elymoclavine oxidase cloA. Paspalic acid is then further converted to D-lysergic acid. Ergopeptines are assembled from D-lysergic acid and three different amino acids by the D-lysergyl-peptide-synthetases composed each of a monomudular and a trimodular nonribosomal peptide synthetase subunit. LpsB and lpsC encode the monomodular subunits responsible for D-lysergic acid activation and incorporation into the ergopeptine backbone. LpsA1 and A2 subunits encode the trimodular nonribosomal peptide synthetase assembling the tripeptide portion of ergopeptines. LpsA1 is responsible for formation of the major ergopeptine, ergotamine, and lpsA2 for alpha-ergocryptine, the minor ergopeptine of the total alkaloid mixture elaborated by C.purpurea. D-lysergyl-tripeptides are assembled by the nonribosomal peptide synthetases and released as N-(D-lysergyl-aminoacyl)-lactams. Cyclolization of the D-lysergyl-tripeptides is performed by the Fe(2+)/2-ketoglutarate-dependent dioxygenase easH which introduces a hydroxyl group into N-(D-lysergyl-aminoacyl)-lactam at alpha-C of the aminoacyl residue followed by spontaneous condensation with the terminal lactam carbonyl group. The polypeptide is Dioxygenase easH (Claviceps purpurea (strain 20.1) (Ergot fungus)).